Reading from the N-terminus, the 274-residue chain is Prothoracicostatic peptide (274 aa).

The first 19 residues, 1–19 (MRWCLFALWVFGVATVVTA), serve as a signal peptide directing secretion. A propeptide spanning residues 20-67 (AEEPHHDAAPQTDNEVDLTEDDKRAWSSLHSGWAKRAWQDMSSAWGKR) is cleaved from the precursor. Trp-76 is subject to Tryptophan amide. A propeptide spanning residues 77-91 (GKRGWQDLNSAWGKR) is cleaved from the precursor. Residue Trp-100 is modified to Tryptophan amide. The propeptide occupies 101 to 136 (GKRGWQDLNSAWGKRDDDEAMEKKSWQDLNSVWGKR). Trp-145 is modified (tryptophan amide). The propeptide occupies 146–148 (GKR). Tryptophan amide is present on Trp-157. A propeptide spanning residues 158-172 (GKRGWNDISSVWGKR) is cleaved from the precursor. Position 181 is a tryptophan amide (Trp-181). The propeptide occupies 182–274 (GKRAWQDMSS…NEHSATTNEA (93 aa)).

The protein localises to the secreted. In terms of biological role, inhibits ecdysteroid biosynthesis in the prothoracic gland of fifth instar larvae, with maximum inhibition during the spinning stage. When administered to day 8 fifth instar larvae it produces a significant delay in the commencement spinning behavior. The sequence is that of Prothoracicostatic peptide from Bombyx mori (Silk moth).